Reading from the N-terminus, the 470-residue chain is ATP synthase subunit beta (470 aa).

148 to 155 (GGAGVGKT) provides a ligand contact to ATP.

This sequence belongs to the ATPase alpha/beta chains family. F-type ATPases have 2 components, CF(1) - the catalytic core - and CF(0) - the membrane proton channel. CF(1) has five subunits: alpha(3), beta(3), gamma(1), delta(1), epsilon(1). CF(0) has three main subunits: a(1), b(2) and c(9-12). The alpha and beta chains form an alternating ring which encloses part of the gamma chain. CF(1) is attached to CF(0) by a central stalk formed by the gamma and epsilon chains, while a peripheral stalk is formed by the delta and b chains.

It localises to the cell inner membrane. It catalyses the reaction ATP + H2O + 4 H(+)(in) = ADP + phosphate + 5 H(+)(out). Produces ATP from ADP in the presence of a proton gradient across the membrane. The catalytic sites are hosted primarily by the beta subunits. The polypeptide is ATP synthase subunit beta (Teredinibacter turnerae (strain ATCC 39867 / T7901)).